The primary structure comprises 234 residues: Large ribosomal subunit protein uL3 (234 aa).

A disordered region spans residues 137 to 156 (AGHGVERKHRSPGSVGGCAT).

Belongs to the universal ribosomal protein uL3 family. In terms of assembly, part of the 50S ribosomal subunit. Forms a cluster with proteins L14 and L19.

One of the primary rRNA binding proteins, it binds directly near the 3'-end of the 23S rRNA, where it nucleates assembly of the 50S subunit. This Frankia alni (strain DSM 45986 / CECT 9034 / ACN14a) protein is Large ribosomal subunit protein uL3.